Consider the following 234-residue polypeptide: Leucyl/phenylalanyl-tRNA--protein transferase (234 aa).

This sequence belongs to the L/F-transferase family.

Its subcellular location is the cytoplasm. The enzyme catalyses N-terminal L-lysyl-[protein] + L-leucyl-tRNA(Leu) = N-terminal L-leucyl-L-lysyl-[protein] + tRNA(Leu) + H(+). The catalysed reaction is N-terminal L-arginyl-[protein] + L-leucyl-tRNA(Leu) = N-terminal L-leucyl-L-arginyl-[protein] + tRNA(Leu) + H(+). It catalyses the reaction L-phenylalanyl-tRNA(Phe) + an N-terminal L-alpha-aminoacyl-[protein] = an N-terminal L-phenylalanyl-L-alpha-aminoacyl-[protein] + tRNA(Phe). Functionally, functions in the N-end rule pathway of protein degradation where it conjugates Leu, Phe and, less efficiently, Met from aminoacyl-tRNAs to the N-termini of proteins containing an N-terminal arginine or lysine. The sequence is that of Leucyl/phenylalanyl-tRNA--protein transferase from Enterobacter sp. (strain 638).